Reading from the N-terminus, the 1161-residue chain is Integrin alpha-D (1161 aa).

Positions 1-17 are cleaved as a signal peptide; that stretch reads MTFGTVLLLSVLASYHG. The Extracellular segment spans residues 18 to 1099; sequence FNLDVEEPTI…MVLEEDEVYN (1082 aa). FG-GAP repeat units follow at residues 19–76 and 77–136; these read NLDV…MCQP and IPLH…IIQT. N-linked (GlcNAc...) asparagine glycosylation is present at N59. The cysteines at positions 67 and 74 are disulfide-linked. 2 N-linked (GlcNAc...) asparagine glycosylation sites follow: N87 and N99. C106 and C124 are joined by a disulfide. The VWFA domain occupies 150–332; that stretch reads DIVFLIDGSG…SIQKQLQEKI (183 aa). 5 FG-GAP repeats span residues 339-390, 391-442, 443-503, 506-564, and 569-629; these read QSRA…PTFI, NMSQ…SRQW, RKKA…RVQW, DAVL…SGIS, and QRIA…FSPV. N-linked (GlcNAc...) asparagine glycosylation is present at N391. Residues D465, D467, D469, D473, D529, N531, D533, D537, D592, D596, and D600 each contribute to the Ca(2+) site. The cysteines at positions 654 and 709 are disulfide-linked. N690 and N732 each carry an N-linked (GlcNAc...) asparagine glycan. 2 disulfides stabilise this stretch: C768–C774 and C845–C860. N872 and N956 each carry an N-linked (GlcNAc...) asparagine glycan. Disulfide bonds link C993-C1017 and C1022-C1027. N1045 is a glycosylation site (N-linked (GlcNAc...) asparagine). Residues 1100-1120 form a helical membrane-spanning segment; the sequence is AIPIIMGSSVGALLLLALITA. The Cytoplasmic segment spans residues 1121–1161; it reads TLYKLGFFKRHYKEMLEDKPEDTATFSGDDFSCVAPNVPLS. Positions 1126-1130 match the GFFKR motif motif; it reads GFFKR.

It belongs to the integrin alpha chain family. In terms of assembly, heterodimer of an alpha and a beta subunit. Alpha-D associates with beta-2. Expressed moderately on myelomonocytic cell lines and subsets of peripheral blood leukocytes and strongly on tissue-specialized cells, including macrophages foam cells within atherosclerotic plaques, and on splenic red pulp macrophages.

The protein resides in the membrane. Functionally, integrin alpha-D/beta-2 is a receptor for ICAM3 and VCAM1. May play a role in the atherosclerotic process such as clearing lipoproteins from plaques and in phagocytosis of blood-borne pathogens, particulate matter, and senescent erythrocytes from the blood. The chain is Integrin alpha-D (ITGAD) from Homo sapiens (Human).